The following is a 359-amino-acid chain: 4'-phosphopantetheinyl transferase A (359 aa).

This sequence belongs to the P-Pant transferase superfamily.

The enzyme catalyses apo-[ACP] + CoA = holo-[ACP] + adenosine 3',5'-bisphosphate + H(+). With respect to regulation, activity is inhibited bythe antifunfal copmpounds PD 404,182, 6-nitroso-1,2-benzopyrone, and calmidazolium chloride with IC(50) values of 3.9 uM, 35.2 uM, and 19.2 uM, respectively. Functionally, acyl-carrier-protein synthase that transfers the 4'-phosphopantetheine moiety from coenzyme A to a Ser of an acyl-carrier-protein. The 4'-phosphopantetheine (4'-PPT) portion of CoA provides the essential prosthetic group for a number of carrier proteins and multi-domain enzymes, priming them for the acceptance of acyl building blocks in fatty acid synthesis and many aspects of secondary metabolism mediated by polyketide synthases (PKSs) and non-ribosomal peptide synthetases (NRPSs). PptA is able to transfer the cofactor to a broad range of enzymes with acyl- or peptidyl-carrier protein domains and activates target enzymes involved in the synthesis of lysine, but also secondary metabolites including gliotoxin, fumigaclavine C, fumiquinazole A, fumiquinazoline C, pyripyroprene A, fumagillin, the siderophores triacetylfusarinine C (TAFC) and ferricrocin (FC), and dihydroxy naphthalene (DHN)-melanin. Plays an essential role in virulence. The chain is 4'-phosphopantetheinyl transferase A from Aspergillus fumigatus (strain ATCC MYA-4609 / CBS 101355 / FGSC A1100 / Af293) (Neosartorya fumigata).